We begin with the raw amino-acid sequence, 204 residues long: MATNPTPRIGKAQRATKESDIQVEWNLDGTGKTDIDTGVPFFDHMLTALGAHGSFDLKVHARGDVEIDAHHTVEDTAIVMGQALAQALGDKAGIRRFGDAFIPMDETLAHAAVDVSGRPYYVGVGEPEQMLSSVIGGHYATVINQHFFETLALNSRIALHVRCLYGRDPHHITEAEFKAVARALRAAVEDDPRVGGVPSTKGTL.

Belongs to the imidazoleglycerol-phosphate dehydratase family.

The protein resides in the cytoplasm. The enzyme catalyses D-erythro-1-(imidazol-4-yl)glycerol 3-phosphate = 3-(imidazol-4-yl)-2-oxopropyl phosphate + H2O. The protein operates within amino-acid biosynthesis; L-histidine biosynthesis; L-histidine from 5-phospho-alpha-D-ribose 1-diphosphate: step 6/9. The chain is Imidazoleglycerol-phosphate dehydratase from Corynebacterium jeikeium (strain K411).